The sequence spans 324 residues: MTQQPQADAPLAGRHIAVLLGGPSSERKVSLVSGAACAEALERLGAKVSRIDPGPDVAQVLAATKPDMVFNALHGEWGEDGCVQGVLETLKLPYTHSGVLASALAMDKAKAKAVLAAAGVTVPGGGLFNRHDVARDHVLQPPYVVKPNAEGSSVGVFIIKEGANRPPEEVGAPSWTFGEEVMVEPYIQGMELAVAVLGESNGPRALAVTDIRASTGFYDYEAKYSEGGSIHVLPAPIPNAVRDRAMRMAELAHTALGCRGVTRSDFRYDDINDLLVLLEVNTQPGMTPTSLAPEQADHVGIPFDQLVLWIVEDAYARCSAGGTA.

The 201-residue stretch at 112–312 (KAVLAAAGVT…FDQLVLWIVE (201 aa)) folds into the ATP-grasp domain. ATP is bound at residue 139–193 (LQPPYVVKPNAEGSSVGVFIIKEGANRPPEEVGAPSWTFGEEVMVEPYIQGMELA). Residues D265, E279, and N281 each coordinate Mg(2+).

Belongs to the D-alanine--D-alanine ligase family. Mg(2+) serves as cofactor. Mn(2+) is required as a cofactor.

It is found in the cytoplasm. It catalyses the reaction 2 D-alanine + ATP = D-alanyl-D-alanine + ADP + phosphate + H(+). It functions in the pathway cell wall biogenesis; peptidoglycan biosynthesis. Functionally, cell wall formation. In Caulobacter vibrioides (strain ATCC 19089 / CIP 103742 / CB 15) (Caulobacter crescentus), this protein is D-alanine--D-alanine ligase.